A 132-amino-acid chain; its full sequence is Small ribosomal subunit protein uS8 (132 aa).

Belongs to the universal ribosomal protein uS8 family. In terms of assembly, part of the 30S ribosomal subunit. Contacts proteins S5 and S12.

Its function is as follows. One of the primary rRNA binding proteins, it binds directly to 16S rRNA central domain where it helps coordinate assembly of the platform of the 30S subunit. The sequence is that of Small ribosomal subunit protein uS8 from Psychrobacter sp. (strain PRwf-1).